Here is a 278-residue protein sequence, read N- to C-terminus: UPF0276 protein Sama_1305 (278 aa).

It belongs to the UPF0276 family.

The polypeptide is UPF0276 protein Sama_1305 (Shewanella amazonensis (strain ATCC BAA-1098 / SB2B)).